We begin with the raw amino-acid sequence, 50 residues long: Inducible serine protease inhibitor 1 (50 aa).

A disordered region spans residues 1-27; it reads DLVXGTNFXKNNPXSTRVAANSXRSPS. The span at 8–25 shows a compositional bias: polar residues; sequence FXKNNPXSTRVAANSXRS.

Functionally, inhibits trypsin and the toxin protease PR2 of M.anisopliae. Does not inhibit chymotrypsin, subtilisin Carlsberg, proteinase K, porcine pancreatic elastase and the toxin protease PR1 of M.anisopliae. This Galleria mellonella (Greater wax moth) protein is Inducible serine protease inhibitor 1.